A 221-amino-acid chain; its full sequence is Sperm acrosome membrane-associated protein 3 (221 aa).

Residues 1-69 are Cytoplasmic-facing; the sequence is MGICMSMYTQ…EARSRAPRRQ (69 aa). The chain crosses the membrane as a helical; Signal-anchor for type II membrane protein span at residues 70–90; sequence LCPPGITWLALAYLLSCLLAS. Topologically, residues 91 to 221 are extracellular; the sequence is SKAKVFSRCE…LSDWVDGCDF (131 aa). One can recognise a C-type lysozyme domain in the interval 94 to 221; the sequence is KVFSRCELAK…LSDWVDGCDF (128 aa). Intrachain disulfides connect cysteine 99/cysteine 219, cysteine 123/cysteine 207, cysteine 157/cysteine 172, and cysteine 168/cysteine 186.

The protein belongs to the glycosyl hydrolase 22 family. As to quaternary structure, interacts with ASTL. In terms of tissue distribution, the processed form is expressed in sperm (at protein level). Expressed strongly in testis and epididymis and weakly in pancreas.

It is found in the cytoplasmic vesicle. The protein resides in the secretory vesicle. It localises to the acrosome membrane. The protein localises to the secreted. Functionally, sperm surface membrane protein that may be involved in sperm-egg plasma membrane adhesion and fusion during fertilization. It could be a potential receptor for the egg oligosaccharide residue N-acetylglucosamine, which is present in the extracellular matrix over the egg plasma membrane. The processed form has no detectable bacteriolytic activity in vitro. The chain is Sperm acrosome membrane-associated protein 3 (Spaca3) from Mus musculus (Mouse).